A 156-amino-acid polypeptide reads, in one-letter code: Putative pre-16S rRNA nuclease (156 aa).

This sequence belongs to the YqgF nuclease family.

The protein resides in the cytoplasm. Functionally, could be a nuclease involved in processing of the 5'-end of pre-16S rRNA. In Rickettsia typhi (strain ATCC VR-144 / Wilmington), this protein is Putative pre-16S rRNA nuclease.